A 399-amino-acid chain; its full sequence is Developmentally-regulated G-protein 1 (399 aa).

In terms of domain architecture, OBG-type G spans G63 to G288. GTP is bound by residues G69 to S76, D115 to I119, and N246 to D249. The 79-residue stretch at G288–K366 folds into the TGS domain. The segment at K367–Q399 is disordered. The span at I388 to Q399 shows a compositional bias: basic and acidic residues.

The protein belongs to the TRAFAC class OBG-HflX-like GTPase superfamily. OBG GTPase family. Expressed in actively growing tissues and reproductive organs. Mostly expressed in leaves, stems and siliques. Also present in flowers and flower buds, and, to a lower extent, in roots.

It is found in the cytoplasmic vesicle. The protein resides in the cytoplasm. Functionally, binds GDP and GTP, and has low GTPase activity. May interact with phosphatidic acid (PA). This Arabidopsis thaliana (Mouse-ear cress) protein is Developmentally-regulated G-protein 1 (DRG1).